A 977-amino-acid chain; its full sequence is MFFALLFLIGILLGQVQGWSEPRIRLSSGALAGTDVILESGSPLQLVCEGDGPVTFLPRLAKHKRYISKEVGKIRSFRVEKTTVDFTGTYKCVYMNGNDSNLSSSVHVFVRDSRVLFVSPSTSLRYVRKEGEDLLLPCLLTDPEATDFTFRMDNGSAAPYGMNITYDPRKGVLIRNVHPGFNADYICCARIGGAEKVSKIFSINIIQRLRFPPYVYLKRNEYVKLVGERLQISCTTNNPNFYYNVTWTHSSRMLPKAEEKSTMEGDRLAIESILTIPSVQLSHTGNITCTGQNEAGANSSTTQLLVVEEPYIRLSPKLSSKLTHRGLSIEVSEGDDVDLGVLIEAYPPLTSHKWETPTSHNASLPENRFFNHNDRYEALLLLKRLNFEEIGQYTLNVKNSMKSASITFDIKMYTKPVARVKWENVTTLSCRSYGYPAPSILWYQCTGIRTTCPENTTDLQPIQTQTVEFQKESFGAVGVESVLTVGPNRRMTVVCVAFNLVGQGSDTFSMEVSDQIFTSAMCGSTVAMVVLGLLLIFMIYKYKQKPRYEIRWKIIEATNGNNYTFIDPTQLPYNEKWEFPRDKLKLGKTLGAGAFGKVVEATAYGLGKEDNITRVAVKMLKASAHPDEREALMSELKILSHLGQHKNIVNLLGACTHGGPVLVITEYCCHGDLLNFLRSKAENFLNFVMTIPNFPEPMTDYKNVSTERMFVRSDSGISSTCSDHYLDMRPVTSRPTNSALDSSSECQEDSWPLDMDDLLRFSSQVAQGLDFLAAKNCIHRDVAARNVLLTNSRVAKICDFGLARDIMNDSNYVVKGNARLPVKWMAPESIFECVYTVQSDVWSYGIMLWEIFSLGKSPYPNILVDSKFYKMIKCGYQMSRPDFAPPEMYTIMKMCWNLDAAERPTFSKISQMIQRMLGETSEQQDTQEYKNIPTEAEAEQQLESCDPVKHEDESFETSCDQEEEDQPLMKPNNYQFC.

The first 18 residues, 1–18 (MFFALLFLIGILLGQVQG), serve as a signal peptide directing secretion. Residues 19–519 (WSEPRIRLSS…MEVSDQIFTS (501 aa)) lie on the Extracellular side of the membrane. 5 consecutive Ig-like C2-type domains span residues 22-109 (PRIR…VHVF), 120-198 (PSTS…EKVS), 213-305 (PYVY…TQLL), 316-407 (PKLS…ASIT), and 408-513 (FDIK…MEVS). Cys-48 and Cys-92 are joined by a disulfide. 10 N-linked (GlcNAc...) asparagine glycosylation sites follow: Asn-98, Asn-101, Asn-154, Asn-163, Asn-244, Asn-286, Asn-298, Asn-361, Asn-424, and Asn-455. Intrachain disulfides connect Cys-138–Cys-187 and Cys-234–Cys-289. Cys-430 and Cys-495 are oxidised to a cystine. Residues 520–540 (AMCGSTVAMVVLGLLLIFMIY) form a helical membrane-spanning segment. Residues 541 to 977 (KYKQKPRYEI…LMKPNNYQFC (437 aa)) are Cytoplasmic-facing. Residues 544–576 (QKPRYEIRWKIIEATNGNNYTFIDPTQLPYNEK) form a regulatory juxtamembrane domain region. Tyr-563 is subject to Phosphotyrosine; by autocatalysis. The Protein kinase domain occupies 584–917 (LKLGKTLGAG…KISQMIQRML (334 aa)). ATP is bound by residues 590-598 (LGAGAFGKV) and Lys-618. Tyr-701 and Tyr-725 each carry phosphotyrosine; by autocatalysis. Residue Asp-781 is the Proton acceptor of the active site. The segment at 799 to 821 (DFGLARDIMNDSNYVVKGNARLP) is activation loop. 2 positions are modified to phosphotyrosine; by autocatalysis: Tyr-812 and Tyr-929. Positions 919 to 977 (ETSEQQDTQEYKNIPTEAEAEQQLESCDPVKHEDESFETSCDQEEEDQPLMKPNNYQFC) are disordered. Over residues 953-966 (ESFETSCDQEEEDQ) the composition is skewed to acidic residues. Tyr-974 carries the post-translational modification Phosphotyrosine; by autocatalysis.

This sequence belongs to the protein kinase superfamily. Tyr protein kinase family. CSF-1/PDGF receptor subfamily. Monomer. Homodimer. Interacts with CSF1. In terms of processing, autophosphorylated in response to CSF1 binding. autophosphorylation, leading to its degradation. Ubiquitinated. Becomes rapidly polyubiquitinated after autophosphorylation, leading to its degradation.

The protein localises to the cell membrane. It catalyses the reaction L-tyrosyl-[protein] + ATP = O-phospho-L-tyrosyl-[protein] + ADP + H(+). Its activity is regulated as follows. Present in an inactive conformation in the absence of bound ligand. CSF1 binding leads to dimerization and activation by autophosphorylation on tyrosine residues. In terms of biological role, tyrosine-protein kinase that acts as a cell-surface receptor for CSF1 and plays an essential role in the regulation of survival, proliferation and differentiation of hematopoietic precursor cells, especially mononuclear phagocytes, such as macrophages and monocytes. Plays an important role in innate immunity and in inflammatory processes. Plays an important role in the regulation of osteoclast proliferation and differentiation, the regulation of bone resorption, and is required for normal bone development. Promotes reorganization of the actin cytoskeleton, regulates formation of membrane ruffles, cell adhesion and cell migration. Activates several signaling pathways in response to ligand binding. This Danio rerio (Zebrafish) protein is Macrophage colony-stimulating factor 1 receptor (csf1r).